The chain runs to 125 residues: Large ribosomal subunit protein eL31 (125 aa).

This sequence belongs to the eukaryotic ribosomal protein eL31 family. Component of the large ribosomal subunit.

It is found in the cytoplasm. Its function is as follows. Component of the large ribosomal subunit. The ribosome is a large ribonucleoprotein complex responsible for the synthesis of proteins in the cell. The polypeptide is Large ribosomal subunit protein eL31 (rpl31) (Xenopus laevis (African clawed frog)).